The chain runs to 131 residues: Small ribosomal subunit protein uS8 (131 aa).

This sequence belongs to the universal ribosomal protein uS8 family. Part of the 30S ribosomal subunit. Contacts proteins S5 and S12.

One of the primary rRNA binding proteins, it binds directly to 16S rRNA central domain where it helps coordinate assembly of the platform of the 30S subunit. The sequence is that of Small ribosomal subunit protein uS8 from Dictyoglomus thermophilum (strain ATCC 35947 / DSM 3960 / H-6-12).